Reading from the N-terminus, the 117-residue chain is MAKLLSRNDARKAKHLRIRNKIRKTTNLPRVFVYKSLQNFYAQLFDDKLNKTIVSLGTSKNKEYSGNIAAAKKLGHEMGALLKTKKIDKIVFDRSGYIYHGRVKAFAEAMREEGVKF.

This sequence belongs to the universal ribosomal protein uL18 family. As to quaternary structure, part of the 50S ribosomal subunit; part of the 5S rRNA/L5/L18/L25 subcomplex. Contacts the 5S and 23S rRNAs.

Its function is as follows. This is one of the proteins that bind and probably mediate the attachment of the 5S RNA into the large ribosomal subunit, where it forms part of the central protuberance. The sequence is that of Large ribosomal subunit protein uL18 from Mycoplasma mobile (strain ATCC 43663 / 163K / NCTC 11711) (Mesomycoplasma mobile).